The chain runs to 281 residues: ATP synthase subunit a (281 aa).

Transmembrane regions (helical) follow at residues 56–76, 117–137, 144–164, 181–201, 215–235, 237–257, and 259–279; these read KPML…WAAF, LVVS…IPVA, IIAY…TLTF, KSLG…NILI, FAGH…LNGV, IAYA…ELFI, and ALQA…AMAE.

Belongs to the ATPase A chain family. F-type ATPases have 2 components, CF(1) - the catalytic core - and CF(0) - the membrane proton channel. CF(1) has five subunits: alpha(3), beta(3), gamma(1), delta(1), epsilon(1). CF(0) has three main subunits: a(1), b(2) and c(9-12). The alpha and beta chains form an alternating ring which encloses part of the gamma chain. CF(1) is attached to CF(0) by a central stalk formed by the gamma and epsilon chains, while a peripheral stalk is formed by the delta and b chains.

The protein resides in the cell membrane. Key component of the proton channel; it plays a direct role in the translocation of protons across the membrane. The chain is ATP synthase subunit a from Streptomyces lividans.